The chain runs to 148 residues: Putative nickel-responsive regulator (148 aa).

4 residues coordinate Ni(2+): His88, His99, His101, and Cys107.

It belongs to the transcriptional regulatory CopG/NikR family. Requires Ni(2+) as cofactor.

Its function is as follows. Transcriptional regulator. The polypeptide is Putative nickel-responsive regulator (Helicobacter pylori (strain Shi470)).